A 438-amino-acid polypeptide reads, in one-letter code: Histidine--tRNA ligase (438 aa).

This sequence belongs to the class-II aminoacyl-tRNA synthetase family. Homodimer.

It is found in the cytoplasm. The enzyme catalyses tRNA(His) + L-histidine + ATP = L-histidyl-tRNA(His) + AMP + diphosphate + H(+). This Thermobifida fusca (strain YX) protein is Histidine--tRNA ligase (hisS).